The sequence spans 533 residues: (E)-beta-farnesene synthase (533 aa).

Residues aspartate 286, aspartate 290, asparagine 430, serine 434, and glutamate 438 each coordinate Mg(2+). The short motif at 286-290 is the DDXXD motif element; it reads DDMMD.

The protein belongs to the terpene synthase family. Mg(2+) is required as a cofactor. The cofactor is Co(2+). Mn(2+) serves as cofactor.

It is found in the cytoplasm. It carries out the reaction (2E,6E)-farnesyl diphosphate = (E)-beta-farnesene + diphosphate. The protein operates within secondary metabolite biosynthesis; terpenoid biosynthesis. Sesquiterpene cyclase catalyzing the production of sixfold more beta-farnesene than alpha-bergamotene from farnesyl diphosphate. Involved in indirect defense by producing volatile signals attracting natural enemies of herbivores. In Zea perennis (Perennial teosinte), this protein is (E)-beta-farnesene synthase.